A 129-amino-acid chain; its full sequence is Small ribosomal subunit protein uS11 (129 aa).

The protein belongs to the universal ribosomal protein uS11 family. As to quaternary structure, part of the 30S ribosomal subunit. Interacts with proteins S7 and S18. Binds to IF-3.

In terms of biological role, located on the platform of the 30S subunit, it bridges several disparate RNA helices of the 16S rRNA. Forms part of the Shine-Dalgarno cleft in the 70S ribosome. The polypeptide is Small ribosomal subunit protein uS11 (Zymomonas mobilis subsp. mobilis (strain ATCC 31821 / ZM4 / CP4)).